Consider the following 263-residue polypeptide: Small ribosomal subunit protein eS4 (263 aa).

An S4 RNA-binding domain is found at 42–104 (LPLIIFLRNR…TGEHFRLVYD (63 aa)).

It belongs to the eukaryotic ribosomal protein eS4 family.

The sequence is that of Small ribosomal subunit protein eS4 (RPS4) from Gallus gallus (Chicken).